Consider the following 1059-residue polypeptide: Disks large-associated protein 2 (1059 aa).

Disordered regions lie at residues 31-56 and 244-311; these read GEPEEEEGGDLAQPGLSFPGPAEEDI and TKSH…SDST. Positions 244 to 261 are enriched in polar residues; sequence TKSHSLEGSSKSNINGTK. A compositionally biased stretch (basic and acidic residues) spans 262–271; the sequence is SEGRMDDHHQ. Basic residues predominate over residues 272-285; the sequence is SHLSKHSKRSKSKE. A phosphoserine mark is found at Ser-302, Ser-308, Ser-390, and Ser-456. Disordered stretches follow at residues 446-466 and 632-669; these read GDEESGESDSSPKTSPTVALR and VTAQSSTESTQDAYQDSRAQRMSPWPQDSRGGLYNSMD. The span at 632-645 shows a compositional bias: polar residues; it reads VTAQSSTESTQDAY. 4 positions are modified to phosphoserine: Ser-667, Ser-670, Ser-673, and Ser-720. The interval 723-756 is disordered; it reads VQDSEFPDHQPYPRSDVETATDSDTESRGLREYH. Thr-743 bears the Phosphothreonine mark. Position 745 is a phosphoserine (Ser-745). The segment covering 747–756 has biased composition (basic and acidic residues); the sequence is TESRGLREYH. 4 positions are modified to phosphoserine: Ser-776, Ser-811, Ser-983, and Ser-1012. The interval 985-1024 is disordered; the sequence is ERKEERKIPPPIPKKPPKGKFPITREKSLDLPDRQRQEAR. The span at 1007–1024 shows a compositional bias: basic and acidic residues; the sequence is ITREKSLDLPDRQRQEAR.

It belongs to the SAPAP family. Interacts with DLG4/PSD-95. As to expression, expressed in various brain areas.

It localises to the cell membrane. The protein localises to the postsynaptic density. It is found in the synapse. Functionally, may play a role in the molecular organization of synapses and neuronal cell signaling. Could be an adapter protein linking ion channel to the subsynaptic cytoskeleton. May induce enrichment of PSD-95/SAP90 at the plasma membrane. The chain is Disks large-associated protein 2 from Rattus norvegicus (Rat).